The chain runs to 272 residues: 2-dehydro-3-deoxyphosphooctonate aldolase (272 aa).

It belongs to the KdsA family.

The protein resides in the cytoplasm. The catalysed reaction is D-arabinose 5-phosphate + phosphoenolpyruvate + H2O = 3-deoxy-alpha-D-manno-2-octulosonate-8-phosphate + phosphate. It participates in carbohydrate biosynthesis; 3-deoxy-D-manno-octulosonate biosynthesis; 3-deoxy-D-manno-octulosonate from D-ribulose 5-phosphate: step 2/3. The protein operates within bacterial outer membrane biogenesis; lipopolysaccharide biosynthesis. The chain is 2-dehydro-3-deoxyphosphooctonate aldolase from Geobacter sulfurreducens (strain ATCC 51573 / DSM 12127 / PCA).